We begin with the raw amino-acid sequence, 58 residues long: Cecropin-B (58 aa).

The N-terminal stretch at 1-21 is a signal peptide; it reads ILSFVFACLLALSAVSAAPEP.

The protein belongs to the cecropin family.

The protein localises to the secreted. Its function is as follows. Cecropins have lytic and antibacterial activity against several Gram-positive and Gram-negative bacteria. In Spodoptera litura (Asian cotton leafworm), this protein is Cecropin-B (CECB).